The chain runs to 575 residues: Estrogen receptor beta (575 aa).

The tract at residues 1 to 160 (MSSSLSPTLQ…GAVVKRDMHF (160 aa)) is modulating. Positions 108-151 (DTKPHTSGRHSSFLSRPKLFGKRPEDGDGDEALDDDDPSSSSSG) are disordered. The span at 134–145 (GDGDEALDDDDP) shows a compositional bias: acidic residues. 2 NR C4-type zinc fingers span residues 161–181 (CVVCHDYASGYHYGVWSCEGC) and 197–221 (CPATNQCTIDKNRRKSCQACRLRKC). The segment at residues 161-226 (CVVCHDYASG…RLRKCYEMGM (66 aa)) is a DNA-binding region (nuclear receptor). An NR LBD domain is found at 290 to 526 (SPEQLVYCIL…DLLLEMLDAN (237 aa)). The span at 537–549 (VCTDPVTPATSPN) shows a compositional bias: polar residues. Positions 537 to 557 (VCTDPVTPATSPNTPLPPQLH) are disordered.

It belongs to the nuclear hormone receptor family. NR3 subfamily. Binds DNA as a homodimer. Can form a heterodimer with ER-alpha. In terms of tissue distribution, ovary and testis.

The protein localises to the nucleus. In terms of biological role, binds estrogens with an affinity similar to that of ER-alpha, and activates expression of reporter genes containing estrogen response elements (ERE) in an estrogen-dependent manner. This is Estrogen receptor beta (esr2) from Ictalurus punctatus (Channel catfish).